The primary structure comprises 342 residues: MSINIEQAIIHEISQDSQGQLRCRLRPQPLLNSQAVEMMLEELHQTYTSKSGKGFGYFGIHGDDGEANPAFSNALQEYRAGDLGFVEFTGQASKLLQEELAKYDFSQGGFLLMSCYTSMASDFLFVALLSAKSSMTVLDDMELSQNNHLDLSNIQLAARIDLTEWQADKDSRKYISFIRGRAGRKVADFFLDFMGCVEGVNTKAQNKTLMNAVEDFVASSDLTKEERQQCRNKVFEYCSERFDEGADIEIKDLADELADQGMESFYDFARGGSYELDEEFPADKSTLRQLKKFSGTGGGVTISFDGGHLGQRVIYDPISDTLLIKGVPANLKDQLDRRLKGE.

The protein belongs to the YejK family.

It localises to the cytoplasm. Its subcellular location is the nucleoid. The chain is Nucleoid-associated protein Shewmr4_2217 from Shewanella sp. (strain MR-4).